Reading from the N-terminus, the 474-residue chain is 3-isopropylmalate dehydratase large subunit (474 aa).

[4Fe-4S] cluster-binding residues include Cys-353, Cys-413, and Cys-416.

Belongs to the aconitase/IPM isomerase family. LeuC type 1 subfamily. In terms of assembly, heterodimer of LeuC and LeuD. The cofactor is [4Fe-4S] cluster.

It carries out the reaction (2R,3S)-3-isopropylmalate = (2S)-2-isopropylmalate. It functions in the pathway amino-acid biosynthesis; L-leucine biosynthesis; L-leucine from 3-methyl-2-oxobutanoate: step 2/4. In terms of biological role, catalyzes the isomerization between 2-isopropylmalate and 3-isopropylmalate, via the formation of 2-isopropylmaleate. This is 3-isopropylmalate dehydratase large subunit from Roseiflexus sp. (strain RS-1).